A 618-amino-acid chain; its full sequence is Methionine--tRNA ligase (618 aa).

The 'HIGH' region motif lies at 12–22; the sequence is YYVNAEPHLGH. Zn(2+)-binding residues include cysteine 127, cysteine 130, cysteine 144, and histidine 147. The 'KMSKS' region signature appears at 297–301; that stretch reads KMSKT. Lysine 300 is an ATP binding site. The 101-residue stretch at 518 to 618 folds into the tRNA-binding domain; it reads DFAKVELRVA…GEVPPGAVVK (101 aa).

This sequence belongs to the class-I aminoacyl-tRNA synthetase family. MetG type 2A subfamily. In terms of assembly, homodimer. Zn(2+) serves as cofactor.

It is found in the cytoplasm. The catalysed reaction is tRNA(Met) + L-methionine + ATP = L-methionyl-tRNA(Met) + AMP + diphosphate. Is required not only for elongation of protein synthesis but also for the initiation of all mRNA translation through initiator tRNA(fMet) aminoacylation. This Thermus thermophilus (strain ATCC 27634 / DSM 579 / HB8) protein is Methionine--tRNA ligase (metG).